A 598-amino-acid chain; its full sequence is MIQHIRNFSIIAHIDHGKSTLADRIIQFCGGLSDREMEDQVLDSMDLERERGITIKAQTAALHYQAKDGKNYLLNLIDTPGHVDFSYEVSRSLSACEGALLVVDASQGVEAQTVANCYTAIEQGVEVIPVLNKIDLPAADPDRVIAEVEDIIGIEAKGALRISAKTGEGVDQVLEMIVAQIPPPEGDVDAPLKALIIDSWFDSYVGVVMLVRVVDGVLRPGNKILLMSSKANYLCEEVGVFQPKAVSHKSLSAGEVGFIISGIKDLKSAKVGDTVTLADRPAGEPLAGFKEIKPQVFAGLYPVESNQYDALRAALEKLQLNDASLHFEPETSQALGFGFRCGFLGLLHLDIVQERLEREYDMDLITTAPTVVYQVVLRDGKITEIENPSRLPDLSSIEEIREPIITATILVPEEYVGTVMTLCTGKRGIQKNMQYMGRQVMLVYEMPLNEVVMDFFDRLKSVSRGYASLDYEFKEFRAADLVKLDILINSDRVDALSLIVHRASSQHRGRELAQKMRELIPRQMFDIAVQAAIGAHIVARENVKALRKNVLAKCYGGDITRKRKLLEKQKAGKKRMKRVGNVEIPQAAFLAILQVDGK.

A tr-type G domain is found at 3-185 (QHIRNFSIIA…MIVAQIPPPE (183 aa)). Residues 15–20 (DHGKST) and 132–135 (NKID) each bind GTP.

This sequence belongs to the TRAFAC class translation factor GTPase superfamily. Classic translation factor GTPase family. LepA subfamily.

The protein localises to the cell inner membrane. The catalysed reaction is GTP + H2O = GDP + phosphate + H(+). In terms of biological role, required for accurate and efficient protein synthesis under certain stress conditions. May act as a fidelity factor of the translation reaction, by catalyzing a one-codon backward translocation of tRNAs on improperly translocated ribosomes. Back-translocation proceeds from a post-translocation (POST) complex to a pre-translocation (PRE) complex, thus giving elongation factor G a second chance to translocate the tRNAs correctly. Binds to ribosomes in a GTP-dependent manner. This Nitrosomonas europaea (strain ATCC 19718 / CIP 103999 / KCTC 2705 / NBRC 14298) protein is Elongation factor 4.